The following is a 389-amino-acid chain: MDKIYTVSEVTYYIEALIDQDQYLSDIQVVGEIADLKERNGHLFFYLKDEFTTIGCVFFGGAYRSFGLSDGRIAQVAGQIKVYAPRGQYRLICRQAKILPERGTLFLRMKESYERLVAEGIFDKPKRPLPEYPSKIGLITSRNSAAYQDVLRTISDRYPLVEIFLYHTGVQGEDAKGSLLRALKDVNESDVDVVIITRGGGSRDDLWLFNDEDIVRAVYKLRHPVITGVGHQIDTVFIDLVADYSAHTPTAAAQAAVPNLSEIRMHFLELMQRMNLSIRKKIESFSQQIESSNKSLFQSMMSQILRTHSSIDSMKEKAFALMQRQMFSYEKKLSSAGTKLFSLNPVELLKKGYVIVEKDGKWVKSSSILREKDEISMRFFDGVVKVVVK.

This sequence belongs to the XseA family. As to quaternary structure, heterooligomer composed of large and small subunits.

It is found in the cytoplasm. It carries out the reaction Exonucleolytic cleavage in either 5'- to 3'- or 3'- to 5'-direction to yield nucleoside 5'-phosphates.. Functionally, bidirectionally degrades single-stranded DNA into large acid-insoluble oligonucleotides, which are then degraded further into small acid-soluble oligonucleotides. This Pseudothermotoga lettingae (strain ATCC BAA-301 / DSM 14385 / NBRC 107922 / TMO) (Thermotoga lettingae) protein is Exodeoxyribonuclease 7 large subunit.